Consider the following 248-residue polypeptide: 2,3-bisphosphoglycerate-dependent phosphoglycerate mutase (248 aa).

Substrate-binding positions include 8-15 (RHGESQWN), 21-22 (TG), arginine 60, 87-90 (ERHY), lysine 98, 114-115 (RR), and 183-184 (GN). The active-site Tele-phosphohistidine intermediate is histidine 9. Glutamate 87 functions as the Proton donor/acceptor in the catalytic mechanism.

The protein belongs to the phosphoglycerate mutase family. BPG-dependent PGAM subfamily. In terms of assembly, homodimer.

The enzyme catalyses (2R)-2-phosphoglycerate = (2R)-3-phosphoglycerate. Its pathway is carbohydrate degradation; glycolysis; pyruvate from D-glyceraldehyde 3-phosphate: step 3/5. Catalyzes the interconversion of 2-phosphoglycerate and 3-phosphoglycerate. In Alteromonas mediterranea (strain DSM 17117 / CIP 110805 / LMG 28347 / Deep ecotype), this protein is 2,3-bisphosphoglycerate-dependent phosphoglycerate mutase.